The chain runs to 431 residues: Peptidase B (431 aa).

Mn(2+) is bound by residues Lys-196 and Asp-201. Residue Lys-208 is part of the active site. Residues Asp-219, Asp-278, and Glu-280 each contribute to the Mn(2+) site. Residue Arg-282 is part of the active site.

It belongs to the peptidase M17 family. In terms of assembly, homohexamer. Mn(2+) serves as cofactor.

Its subcellular location is the cytoplasm. It carries out the reaction Release of an N-terminal amino acid, Xaa, from a peptide or arylamide. Xaa is preferably Glu or Asp but may be other amino acids, including Leu, Met, His, Cys and Gln.. Functionally, probably plays an important role in intracellular peptide degradation. The sequence is that of Peptidase B from Serratia proteamaculans (strain 568).